Consider the following 449-residue polypeptide: Maltose-6'-phosphate glucosidase (449 aa).

6-72 (FSIVIAGGGS…PDIEFAATTD (67 aa)) serves as a coordination point for NAD(+). Substrate is bound by residues arginine 95 and asparagine 149. Mn(2+) is bound at residue cysteine 171. Aspartate 172 functions as the Proton donor in the catalytic mechanism. Histidine 202 serves as a coordination point for Mn(2+). Tyrosine 265 (proton acceptor) is an active-site residue. Arginine 285 is a substrate binding site.

The protein belongs to the glycosyl hydrolase 4 family. As to quaternary structure, homotetramer. Requires Mn(2+) as cofactor. Fe(2+) is required as a cofactor. It depends on Co(2+) as a cofactor. The cofactor is Ni(2+). NAD(+) serves as cofactor.

The catalysed reaction is alpha-maltose 6'-phosphate + H2O = D-glucose 6-phosphate + D-glucose. With respect to regulation, cellobiose-6'-phosphate and 6-phospho-beta-D-glucopyranoside are not substrates but competitive inhibitors of GlvA. Its function is as follows. Hydrolyzes maltose-6'-phosphate and trehalose-6'-phosphate. Is involved in the catabolism of alpha-glycosides accumulated via a phosphoenolpyruvate-dependent maltose phosphotransferase system (PEP-PTS). Is also able to significantly catalyze the hydrolysis of both 6-phospho-alpha- and 6-phospho-beta-glucosides containing activated leaving groups such as p-nitrophenol and does so with retention and inversion, respectively, of the substrate anomeric configuration. The sequence is that of Maltose-6'-phosphate glucosidase (glvA) from Bacillus subtilis (strain 168).